Consider the following 101-residue polypeptide: Histone H1-like protein EM6 (101 aa).

Basic residues-rich tracts occupy residues alanine 1–lysine 35 and alanine 58–arginine 101. Residues alanine 1–arginine 101 form a disordered region. 4 repeat units span residues lysine 3–arginine 4, serine 5–arginine 6, serine 7–arginine 8, and lysine 9–arginine 10. The interval lysine 3–arginine 22 is 10 X 2 AA approximate tandem repeats of [SK]-R. Residues serine 11–alanine 12 form a 5; approximate repeat. 5 consecutive repeat copies span residues serine 13–arginine 14, lysine 15–arginine 16, serine 17–arginine 18, serine 19–arginine 20, and lysine 21–arginine 22. The globular stretch occupies residues histidine 32–arginine 65.

In terms of tissue distribution, sperm.

The protein localises to the nucleus. It localises to the chromosome. This Ensis minor (Razor shell) protein is Histone H1-like protein EM6.